We begin with the raw amino-acid sequence, 1088 residues long: Methionine S-methyltransferase (1088 aa).

Belongs to the class I-like SAM-binding methyltransferase superfamily. As to quaternary structure, homotetramer. As to expression, expressed in the shoot, scutellum, and aleurone cells but not in the root or endosperm.

It localises to the cytoplasm. The catalysed reaction is L-methionine + S-adenosyl-L-methionine = S-methyl-L-methionine + S-adenosyl-L-homocysteine. Functionally, catalyzes the S-methylmethionine (SMM) biosynthesis from adenosyl-L-homocysteine (AdoMet) and methionine. SMM biosynthesis (by MMT1) and degradation (by HMT-1, HMT-2 and HMT-3) constitute the SMM cycle in plants, which is probably required to achieve short term control of AdoMet level. Also able to catalyze the selenium-methylmethionine (SeMM) from AdoMet and selenium-methionine (SeMet). May play a role in phoem sulfur transport; such function is however not essential. This chain is Methionine S-methyltransferase (MMT1), found in Hordeum vulgare (Barley).